The chain runs to 80 residues: NAD(P)H-quinone oxidoreductase subunit O (80 aa).

This sequence belongs to the complex I NdhO subunit family. As to quaternary structure, NDH-1 can be composed of about 15 different subunits; different subcomplexes with different compositions have been identified which probably have different functions.

The protein localises to the cellular thylakoid membrane. The catalysed reaction is a plastoquinone + NADH + (n+1) H(+)(in) = a plastoquinol + NAD(+) + n H(+)(out). It carries out the reaction a plastoquinone + NADPH + (n+1) H(+)(in) = a plastoquinol + NADP(+) + n H(+)(out). Its function is as follows. NDH-1 shuttles electrons from an unknown electron donor, via FMN and iron-sulfur (Fe-S) centers, to quinones in the respiratory and/or the photosynthetic chain. The immediate electron acceptor for the enzyme in this species is believed to be plastoquinone. Couples the redox reaction to proton translocation, and thus conserves the redox energy in a proton gradient. Cyanobacterial NDH-1 also plays a role in inorganic carbon-concentration. The chain is NAD(P)H-quinone oxidoreductase subunit O from Prochlorococcus marinus (strain MIT 9515).